The following is an 81-amino-acid chain: Small ribosomal subunit protein bS18 (81 aa).

The protein belongs to the bacterial ribosomal protein bS18 family. Part of the 30S ribosomal subunit. Forms a tight heterodimer with protein bS6.

Its function is as follows. Binds as a heterodimer with protein bS6 to the central domain of the 16S rRNA, where it helps stabilize the platform of the 30S subunit. The polypeptide is Small ribosomal subunit protein bS18 (Chlamydia muridarum (strain MoPn / Nigg)).